The chain runs to 309 residues: Prepilin leader peptidase/N-methyltransferase (309 aa).

Residues 35 to 55 (MQLAFAIVLGLVVGSFLNVVV) form a helical membrane-spanning segment. Residues Cys-96, Cys-99, Cys-121, and Cys-124 each contribute to the Zn(2+) site. The next 6 membrane-spanning stretches (helical) occupy residues 147-167 (LALF…AALL), 183-203 (LTLP…FASL), 207-227 (VIGA…FKLL), 230-250 (IEGI…WLGW), 253-273 (LPQV…VATW), and 288-308 (FLAA…LLLG).

The protein belongs to the peptidase A24 family. It depends on Zn(2+) as a cofactor.

It localises to the cell inner membrane. The enzyme catalyses Typically cleaves a -Gly-|-Phe- bond to release an N-terminal, basic peptide of 5-8 residues from type IV prepilin, and then N-methylates the new N-terminal amino group, the methyl donor being S-adenosyl-L-methionine.. Its function is as follows. Plays an essential role in type IV pili and type II pseudopili formation by proteolytically removing the leader sequence from substrate proteins and subsequently monomethylating the alpha-amino group of the newly exposed N-terminal phenylalanine. In Burkholderia pseudomallei (strain 1026b), this protein is Prepilin leader peptidase/N-methyltransferase (gspO).